The primary structure comprises 261 residues: Cytochrome c oxidase subunit 3 (261 aa).

Topologically, residues 1–15 (MTHQTHAYHMVDPSP) are mitochondrial matrix. A helical transmembrane segment spans residues 16–34 (WPLTGALSALLMTSGLTMW). Topologically, residues 35 to 40 (FHYHSV) are mitochondrial intermembrane. A helical transmembrane segment spans residues 41 to 66 (TLLLLGLTTNILTMFQWWRDVVREGT). At 67-72 (FQGHHT) the chain is on the mitochondrial matrix side. A helical membrane pass occupies residues 73-105 (PVVQESLRYGMILFITSEVLFFTGFFWAFYHSS). At 106–128 (LAPTPELGSYWPPVGVYPLNPLE) the chain is on the mitochondrial intermembrane side. The helical transmembrane segment at 129-152 (VPLLNTSVLLASGVTITWAHHSLM) threads the bilayer. Residues 153 to 155 (EGN) lie on the Mitochondrial matrix side of the membrane. A helical membrane pass occupies residues 156–183 (RKNMLQALLITILLGVYFTLLQMFEYYE). The Mitochondrial intermembrane portion of the chain corresponds to 184-190 (ASFTISD). Residues 191–223 (GIYGSTFFVTTGFHGLHVIIGSTFLLTCFIRQL) form a helical membrane-spanning segment. Residues 224 to 232 (KFHFTSNHH) are Mitochondrial matrix-facing. Residues 233-256 (FGFEAAAWYWHFVDVVWLFLYLSI) traverse the membrane as a helical segment. Topologically, residues 257–261 (YWWGS) are mitochondrial intermembrane.

The protein belongs to the cytochrome c oxidase subunit 3 family. As to quaternary structure, component of the cytochrome c oxidase (complex IV, CIV), a multisubunit enzyme composed of 14 subunits. The complex is composed of a catalytic core of 3 subunits MT-CO1, MT-CO2 and MT-CO3, encoded in the mitochondrial DNA, and 11 supernumerary subunits COX4I, COX5A, COX5B, COX6A, COX6B, COX6C, COX7A, COX7B, COX7C, COX8 and NDUFA4, which are encoded in the nuclear genome. The complex exists as a monomer or a dimer and forms supercomplexes (SCs) in the inner mitochondrial membrane with NADH-ubiquinone oxidoreductase (complex I, CI) and ubiquinol-cytochrome c oxidoreductase (cytochrome b-c1 complex, complex III, CIII), resulting in different assemblies (supercomplex SCI(1)III(2)IV(1) and megacomplex MCI(2)III(2)IV(2)).

The protein resides in the mitochondrion inner membrane. It catalyses the reaction 4 Fe(II)-[cytochrome c] + O2 + 8 H(+)(in) = 4 Fe(III)-[cytochrome c] + 2 H2O + 4 H(+)(out). In terms of biological role, component of the cytochrome c oxidase, the last enzyme in the mitochondrial electron transport chain which drives oxidative phosphorylation. The respiratory chain contains 3 multisubunit complexes succinate dehydrogenase (complex II, CII), ubiquinol-cytochrome c oxidoreductase (cytochrome b-c1 complex, complex III, CIII) and cytochrome c oxidase (complex IV, CIV), that cooperate to transfer electrons derived from NADH and succinate to molecular oxygen, creating an electrochemical gradient over the inner membrane that drives transmembrane transport and the ATP synthase. Cytochrome c oxidase is the component of the respiratory chain that catalyzes the reduction of oxygen to water. Electrons originating from reduced cytochrome c in the intermembrane space (IMS) are transferred via the dinuclear copper A center (CU(A)) of subunit 2 and heme A of subunit 1 to the active site in subunit 1, a binuclear center (BNC) formed by heme A3 and copper B (CU(B)). The BNC reduces molecular oxygen to 2 water molecules using 4 electrons from cytochrome c in the IMS and 4 protons from the mitochondrial matrix. The chain is Cytochrome c oxidase subunit 3 (MT-CO3) from Loxodonta africana (African elephant).